A 511-amino-acid chain; its full sequence is 2,3-bisphosphoglycerate-independent phosphoglycerate mutase (511 aa).

Mn(2+) is bound at residue Asp12. Tyr36 carries the post-translational modification Phosphotyrosine. Ser62 contributes to the Mn(2+) binding site. The Phosphoserine intermediate role is filled by Ser62. Substrate is bound by residues His123, 153-154 (RD), Arg185, Arg191, 261-264 (RPDR), and Lys336. Mn(2+)-binding residues include Asp403, His407, Asp444, His445, and His462.

The protein belongs to the BPG-independent phosphoglycerate mutase family. Monomer. Mn(2+) is required as a cofactor.

The enzyme catalyses (2R)-2-phosphoglycerate = (2R)-3-phosphoglycerate. It functions in the pathway carbohydrate degradation; glycolysis; pyruvate from D-glyceraldehyde 3-phosphate: step 3/5. Its activity is regulated as follows. Could be inhibited during sporulation by acidification of the forespore, thus allowing accumulation of the spore's large depot of 3-phosphoglyceric acid. Essential for rapid growth and for sporulation. Catalyzes the interconversion of 2-phosphoglycerate (2-PGA) and 3-phosphoglycerate (3-PGA). This is 2,3-bisphosphoglycerate-independent phosphoglycerate mutase from Geobacillus stearothermophilus (Bacillus stearothermophilus).